The primary structure comprises 354 residues: Uroporphyrinogen decarboxylase (354 aa).

Substrate is bound by residues 27 to 31, aspartate 77, tyrosine 154, serine 209, and histidine 327; that span reads RQAGR.

Belongs to the uroporphyrinogen decarboxylase family. Homodimer.

It localises to the cytoplasm. The catalysed reaction is uroporphyrinogen III + 4 H(+) = coproporphyrinogen III + 4 CO2. It participates in porphyrin-containing compound metabolism; protoporphyrin-IX biosynthesis; coproporphyrinogen-III from 5-aminolevulinate: step 4/4. Catalyzes the decarboxylation of four acetate groups of uroporphyrinogen-III to yield coproporphyrinogen-III. The sequence is that of Uroporphyrinogen decarboxylase from Shewanella pealeana (strain ATCC 700345 / ANG-SQ1).